A 292-amino-acid polypeptide reads, in one-letter code: 4-diphosphocytidyl-2-C-methyl-D-erythritol kinase (292 aa).

Lys10 is an active-site residue. Residue 100–110 (PIGSGLGGGSS) coordinates ATP. Residue Asp142 is part of the active site.

This sequence belongs to the GHMP kinase family. IspE subfamily. In terms of assembly, homodimer.

It catalyses the reaction 4-CDP-2-C-methyl-D-erythritol + ATP = 4-CDP-2-C-methyl-D-erythritol 2-phosphate + ADP + H(+). It functions in the pathway isoprenoid biosynthesis; isopentenyl diphosphate biosynthesis via DXP pathway; isopentenyl diphosphate from 1-deoxy-D-xylulose 5-phosphate: step 3/6. Functionally, catalyzes the phosphorylation of the position 2 hydroxy group of 4-diphosphocytidyl-2C-methyl-D-erythritol. The chain is 4-diphosphocytidyl-2-C-methyl-D-erythritol kinase from Buchnera aphidicola subsp. Schizaphis graminum (strain Sg).